An 810-amino-acid chain; its full sequence is Chloride channel protein (810 aa).

Topologically, residues 2 to 48 (SHEKNEASGNPEAQSWKAQEAMLGVKTEVSRWRAVKNCLYRHLVKVL) are cytoplasmic. 2 consecutive transmembrane segments (helical) span residues 49-86 (GEDW…LFAM) and 93-116 (LQYL…CQIV). A Selectivity filter part_1 motif is present at residues 122 to 126 (GSGIP). Ser123 contributes to the chloride binding site. The helical intramembrane region spans 125–132 (IPELKTII). Helical transmembrane passes span 141–160 (LTLR…LSAG) and 166–184 (EGPF…NQLL). A Selectivity filter part_2 motif is present at residues 164–168 (GKEGP). Intramembrane regions (helical) lie at residues 201–213 (ILTV…ISCC) and 217–225 (PLAGVLFSI). Helical transmembrane passes span 237-254 (YWRG…FRVL), 283-311 (LPAF…IVFM), and 320-339 (ILKK…LATL). An N-linked (GlcNAc...) asparagine glycan is attached at Asn365. The next 2 helical transmembrane spans lie at 389–408 (NIFI…AALA) and 416–439 (GAFV…MALL). The short motif at 416–420 (GAFVP) is the Selectivity filter part_3 element. Position 418 (Phe418) interacts with chloride. The segment at residues 456–470 (GEYAVIGAAAMTGAV) is an intramembrane region (helical). Residues 471–472 (TH) constitute an intramembrane region (note=Loop between two helices). The segment at residues 473–484 (AVSTAVICFELT) is an intramembrane region (helical). An intramembrane region (note=Loop between two helices) is located at residues 485–489 (GQISH). The chain crosses the membrane as a helical span at residues 490 to 506 (VLPMMVAVILANMVAQG). At 507-810 (LQPSLYDSII…RTATSNSSGK (304 aa)) the chain is on the cytoplasmic side. Position 512 (Tyr512) interacts with chloride. The region spanning 543–601 (MVRDVTSIASTSTYGDLLHVLRQTKLKFFPFVDTPETNTLLGSIERTEVEGLLQRRISA) is the CBS 1 domain. Disordered regions lie at residues 604–631 (RQPA…DVPG) and 658–688 (KVQT…KHKG). Residues 724-781 (IDQSPFQLVEGTSLQKTHTLFSLLGLDRAYVTSMGKLVGVVALAEIQAAIEGSYQKGF) enclose the CBS 2 domain.

This sequence belongs to the chloride channel (TC 2.A.49) family. ClC-0 subfamily. In terms of assembly, homodimer. Each subunit has channel activity ('Double barreled channel').

The protein localises to the membrane. Voltage-gated chloride channel. This channel is thought to ensure the high conductance of the non-innervated membrane of the electrocyte necessary for efficient current generation caused by sodium influx through the acetylcholine receptor at the innervated membrane. In Tetronarce californica (Pacific electric ray), this protein is Chloride channel protein.